The primary structure comprises 134 residues: Putative pre-16S rRNA nuclease (134 aa).

This sequence belongs to the YqgF nuclease family.

The protein resides in the cytoplasm. Its function is as follows. Could be a nuclease involved in processing of the 5'-end of pre-16S rRNA. The chain is Putative pre-16S rRNA nuclease from Hydrogenovibrio crunogenus (strain DSM 25203 / XCL-2) (Thiomicrospira crunogena).